Reading from the N-terminus, the 483-residue chain is Glutamyl-tRNA(Gln) amidotransferase subunit A (483 aa).

Residues Lys-77 and Ser-152 each act as charge relay system in the active site. Ser-176 acts as the Acyl-ester intermediate in catalysis.

It belongs to the amidase family. GatA subfamily. As to quaternary structure, heterotrimer of A, B and C subunits.

The enzyme catalyses L-glutamyl-tRNA(Gln) + L-glutamine + ATP + H2O = L-glutaminyl-tRNA(Gln) + L-glutamate + ADP + phosphate + H(+). In terms of biological role, allows the formation of correctly charged Gln-tRNA(Gln) through the transamidation of misacylated Glu-tRNA(Gln) in organisms which lack glutaminyl-tRNA synthetase. The reaction takes place in the presence of glutamine and ATP through an activated gamma-phospho-Glu-tRNA(Gln). This Shouchella clausii (strain KSM-K16) (Alkalihalobacillus clausii) protein is Glutamyl-tRNA(Gln) amidotransferase subunit A.